Consider the following 1163-residue polypeptide: GTPase-activating protein (1163 aa).

C2 domains lie at 26 to 148 and 261 to 419; these read PSSN…DHWF and TTST…SAWY. Residues 520–737 form the Ras-GAP domain; it reads ERIAPIIKAL…DAVKHFLEVI (218 aa). The 99-residue stretch at 762–860 folds into the PH domain; the sequence is LKEGLMTKYP…WFDLLHKICL (99 aa). The segment at 862–898 adopts a Btk-type zinc-finger fold; sequence NSIRMQYFHPSAFVSGFYSCCGRSDENSPGCKKVLDK. 4 residues coordinate Zn(2+): His870, Cys881, Cys882, and Cys892. Disordered stretches follow at residues 1026–1051 and 1091–1163; these read LNQQ…LQQF and PFHQ…PPIY. Positions 1091-1157 are enriched in low complexity; that stretch reads PFHQQQQQHH…APPSTTSSSQ (67 aa).

As to quaternary structure, interacts with sty. As to expression, in third instar larvae eye imaginal disk, expressed in cells posterior to the morphogenetic furrow, in all photoreceptor and cone cell precursors as well as in still uncommitted cells.

Functionally, inhibitory regulator of the Ras-cyclic AMP pathway. May function as a negative regulator of Ras85D/Ras1 in the sev signaling pathway. Acts cell autonomously in cone cell precursors as a negative regulator of R7 photoreceptor cell determination. The chain is GTPase-activating protein (RasGAP1) from Drosophila melanogaster (Fruit fly).